A 78-amino-acid polypeptide reads, in one-letter code: Large ribosomal subunit protein eL38 (78 aa).

Belongs to the eukaryotic ribosomal protein eL38 family.

This is Large ribosomal subunit protein eL38 (RpL38) from Maconellicoccus hirsutus (Pink hibiscus mealybug).